Here is a 304-residue protein sequence, read N- to C-terminus: Protein Largen (304 aa).

Low complexity predominate over residues 1–22; sequence MSAKSKGNPSSSSAAEGPPAAS. Disordered stretches follow at residues 1-27, 66-109, 114-133, and 236-304; these read MSAKSKGNPSSSSAAEGPPAASKTKVK, QLED…PPAH, LTVLRKPNPPPPPPRLTPVR, and EPVH…TTTV. Residues 33-70 are a coiled coil; it reads IVEDLELVLGDLKDVAKELKEVVDQIDTLTSDLQLEDE. Over residues 77 to 91 the composition is skewed to low complexity; the sequence is TDTLNSSSSGTTASS. Pro residues-rich tracts occupy residues 120–129 and 275–289; these read PNPPPPPPRL and FPPPTPATVPPPAAP.

Its function is as follows. Regulator of cell size that promotes cell size increase independently of mTOR and Hippo signaling pathways. Acts by stimulating the translation of specific mRNAs, including those encoding proteins affecting mitochondrial functions. Increases mitochondrial mass and respiration. The chain is Protein Largen (Prr16) from Mus musculus (Mouse).